A 140-amino-acid chain; its full sequence is Pro-variola growth factor (140 aa).

A signal peptide spans 1 to 18 (MSMKYLMLLFAAMIIRSF). Residues 19–100 (ANSGNAIETT…SEKPNTTTSY (82 aa)) are Extracellular-facing. N-linked (GlcNAc...) asparagine; by host glycosylation is present at Asn-34. The 41-residue stretch at 41–81 (AIRLCGPEGNGYCFHGICIHARDIDGMYCRCSHGYTGIRCQ) folds into the EGF-like domain. Cystine bridges form between Cys-45/Cys-58, Cys-53/Cys-69, and Cys-71/Cys-80. The N-linked (GlcNAc...) asparagine; by host glycan is linked to Asn-95. Residues 101–121 (IPSPGIVLVLLVSIIMCCLLF) traverse the membrane as a helical segment. At 122–140 (VYRFTRRTNKLPLQDMVVP) the chain is on the cytoplasmic side.

It belongs to the orthopoxvirus OPG019 family. In terms of assembly, variola growth factor interacts with host EGFR and promotes EGFR dimerization.

It localises to the host membrane. The protein resides in the secreted. Stimulates cellular proliferation (hyperplasia)and mobility around infected cells to promote rapid and efficient spread of infection. This effect is beneficial for virus replication in vivo, because poxviruses replicate possibly better in proliferating cells than in quiescent cells. Acts by binding host EGFR, inducing its dimerization, autophosphorylation and leading to activation of several cellular pathways regulating cell proliferation or cell survival. The activation by host EGFR of mitogen activated protein kinases (MAPK) and extracellular-signal regulated kinases (ERK) are essential for the positive effect of vaccinia growth factor on poxvirus virulence in vivo. The sequence is that of Pro-variola growth factor (OPG019) from Variola virus.